The primary structure comprises 578 residues: Oxygen sensor histidine kinase response regulator DevS/DosS (578 aa).

GAF domains lie at 63-200 (DLEA…GIAV) and 231-369 (EPAT…ALAW). A heme-binding site is contributed by H149. The Histidine kinase domain maps to 383–578 (VLTDRDRIAR…VLRWSAPLSQ (196 aa)). Phosphohistidine; by autocatalysis is present on H395.

Requires Mg(2+) as cofactor. Heme serves as cofactor.

The protein localises to the cytoplasm. The enzyme catalyses ATP + protein L-histidine = ADP + protein N-phospho-L-histidine.. In terms of biological role, member of the two-component regulatory system DevR/DevS (DosR/DosS) involved in onset of the dormancy response. Regulates an approximately 48-member regulon. Required for full induction of the DevR (DosR) regulon; acts later than DosT to positively regulate expression of the DevR regulon during adaptation to anaerobiosis. Characterized as an oxygen sensor; O(2) acts as a switch, with O(2)-bound Fe(2+) protein inactive in autophosphorylation. Has also been suggested to act as a redox sensor, or perhaps as a dual oxygen/redox sensor. Donates a phosphate group to transcriptional regulator DevR (DosR). The protein is Oxygen sensor histidine kinase response regulator DevS/DosS (devS) of Mycobacterium tuberculosis (strain CDC 1551 / Oshkosh).